The primary structure comprises 531 residues: Polyamine aminopropyltransferase 1 (531 aa).

7 consecutive transmembrane segments (helical) span residues 27-47 (FLLLLAVFLCAACGLVYELAL), 59-79 (VLQTSVVISVMVFAMGVGSLA), 96-116 (GVLALVGGLSVLMLYAAFAWL), 122-142 (AMIVVSLVVGLLIGAEIPLLM), 160-180 (MFAVDYIGALVGGLCFPLFLL), 188-208 (GALVVGVVNAVAGVIVVVFIF), and 218-238 (AGLLAGVALVLAALGTTYVLA). The interval 205 to 476 (VFIFRRQTGR…VLARPGTEAP (272 aa)) is spermidine synthase. A PABS domain is found at 233–471 (TTYVLADDLE…GNWGFVLARP (239 aa)). Glutamine 263 is a binding site for S-methyl-5'-thioadenosine. Spermidine contacts are provided by histidine 298 and aspartate 320. S-methyl-5'-thioadenosine contacts are provided by residues glutamate 340 and 374 to 375 (DA). Aspartate 392 acts as the Proton acceptor in catalysis.

The protein belongs to the spermidine/spermine synthase family. In terms of assembly, homodimer or homotetramer.

The protein localises to the cell membrane. It catalyses the reaction S-adenosyl 3-(methylsulfanyl)propylamine + putrescine = S-methyl-5'-thioadenosine + spermidine + H(+). The protein operates within amine and polyamine biosynthesis; spermidine biosynthesis; spermidine from putrescine: step 1/1. In terms of biological role, catalyzes the irreversible transfer of a propylamine group from the amino donor S-adenosylmethioninamine (decarboxy-AdoMet) to putrescine (1,4-diaminobutane) to yield spermidine. In Streptomyces coelicolor (strain ATCC BAA-471 / A3(2) / M145), this protein is Polyamine aminopropyltransferase 1.